The following is an 83-amino-acid chain: ATP synthase subunit c (83 aa).

Transmembrane regions (helical) follow at residues 10-30 and 52-72; these read IAVALLIGMGALGTAIGFGLL and MFIVAGLLDAVTMIGVGIALY.

The protein belongs to the ATPase C chain family. As to quaternary structure, F-type ATPases have 2 components, F(1) - the catalytic core - and F(0) - the membrane proton channel. F(1) has five subunits: alpha(3), beta(3), gamma(1), delta(1), epsilon(1). F(0) has three main subunits: a(1), b(2) and c(10-14). The alpha and beta chains form an alternating ring which encloses part of the gamma chain. F(1) is attached to F(0) by a central stalk formed by the gamma and epsilon chains, while a peripheral stalk is formed by the delta and b chains.

The protein resides in the cell inner membrane. Its function is as follows. F(1)F(0) ATP synthase produces ATP from ADP in the presence of a proton or sodium gradient. F-type ATPases consist of two structural domains, F(1) containing the extramembraneous catalytic core and F(0) containing the membrane proton channel, linked together by a central stalk and a peripheral stalk. During catalysis, ATP synthesis in the catalytic domain of F(1) is coupled via a rotary mechanism of the central stalk subunits to proton translocation. Key component of the F(0) channel; it plays a direct role in translocation across the membrane. A homomeric c-ring of between 10-14 subunits forms the central stalk rotor element with the F(1) delta and epsilon subunits. In Shewanella amazonensis (strain ATCC BAA-1098 / SB2B), this protein is ATP synthase subunit c.